A 419-amino-acid polypeptide reads, in one-letter code: D(4) dopamine receptor (419 aa).

At 1–29 (MGNRSTADADGLLAGRGPAAGASAGASAG) the chain is on the extracellular side. The N-linked (GlcNAc...) asparagine glycan is linked to Asn3. A helical membrane pass occupies residues 30 to 50 (LAGQGAAALVGGVLLIGAVLA). The Cytoplasmic segment spans residues 51–71 (GNSLVCVSVATERALQTPTNS). Residues 72–92 (FIVSLAAADLLLALLVLPLFV) form a helical membrane-spanning segment. Asp80 serves as a coordination point for Na(+). The Extracellular segment spans residues 93-110 (YSEVQGGAWLLSPRLCDA). Cysteines 108 and 185 form a disulfide. The chain crosses the membrane as a helical span at residues 111 to 131 (LMAMDVMLCTASIFNLCAISV). Asp115 contacts (2R,3R)-nemonapride. Ser122 contributes to the Na(+) binding site. Topologically, residues 132–152 (DRFVAVAVPLRYNRQGGSRRQ) are cytoplasmic. Residues 153 to 173 (LLLIGATWLLSAAVAAPVLCG) form a helical membrane-spanning segment. The Extracellular segment spans residues 174–192 (LNDVRGRDPAVCRLEDRDY). Residues 193-213 (VVYSSVCSFFLPCPLMLLLYW) form a helical membrane-spanning segment. Ser196 contributes to the (2R,3R)-nemonapride binding site. The Cytoplasmic portion of the chain corresponds to 214-346 (ATFRGLQRWE…ITGRERKAMR (133 aa)). Residues 230-264 (LHGRAPRRPSGPGPPSPTPPAPRLPQDPCGPDCAP) are disordered. A compositionally biased stretch (pro residues) spans 238 to 254 (PSGPGPPSPTPPAPRLP). Residues 249 to 264 (PAPRLPQDPCGPDCAP) form a 1; approximate repeat. Residues 249–312 (PAPRLPQDPC…PDPCGSNCAP (64 aa)) form a 4 X 16 AA approximate tandem repeats of [PA]-A-P-G-L-P-[PQR]-[DG]-P-C-G-P-D-C-A-P region. 2 tandem repeats follow at residues 265–280 (PAPG…DCAP) and 281–296 (AAPS…DCAP). One copy of the 4; approximate repeat lies at 297-312 (PAPGLPPDPCGSNCAP). A disordered region spans residues 317–336 (RAAALPPQTPPQTRRRRRAK). The helical transmembrane segment at 347-367 (VLPVVVGAFLLCWTPFFVVHI) threads the bilayer. Residues 368 to 382 (TQALCPACSVPPRLV) lie on the Extracellular side of the membrane. A disulfide bond links Cys372 and Cys375. The helical transmembrane segment at 383–403 (SAVTWLGYVNSALNPVIYTVF) threads the bilayer. The Cytoplasmic segment spans residues 404–419 (NAEFRNVFRKALRACC). Cys419 is lipidated: S-palmitoyl cysteine.

Belongs to the G-protein coupled receptor 1 family. In terms of assembly, forms homo- and heterooligomers with DRD2. D4.7 allele exhibits higher affinity for homodimers compared to DRD2 heterodimers, while alleles D42. and 4.4 have similar affinities for both. The interaction with DRD2 may modulate agonist-induced downstream signaling. Interacts with CLIC6. Interacts with GPRASP1. May interact with ADORA2A. Interacts with KLHL12. Polyubiquitinated by the BCR(KLHL12) E3 ubiquitin ligase complex: polyubiquitination does not lead to degradation of DRD4 protein. In terms of processing, palmitoylated. Palmitoylation of the C-terminal Cys is important for normal expression at the cell membrane. As to expression, highly expressed in retina. Detected at much lower levels in brain, in amygdala, thalamus, hypothalamus, cerebellum and pituitary.

Its subcellular location is the cell membrane. Its activity is regulated as follows. Signaling in response to agonists such as dopamine, epinephrine and norepinephrine is modulated by Na(+); lower Na(+) levels result in higher receptor activity (in vitro). Dopamine receptor responsible for neuronal signaling in the mesolimbic system of the brain, an area of the brain that regulates emotion and complex behavior. Activated by dopamine, but also by epinephrine and norepinephrine, and by numerous synthetic agonists and drugs. Agonist binding triggers signaling via G proteins that inhibit adenylyl cyclase. Modulates the circadian rhythm of contrast sensitivity by regulating the rhythmic expression of NPAS2 in the retinal ganglion cells. This is D(4) dopamine receptor (DRD4) from Homo sapiens (Human).